Consider the following 405-residue polypeptide: Patatin-like protein 2 (405 aa).

Residues 24–230 enclose the PNPLA domain; sequence LSIDGGGVRG…AANNPTLCAM (207 aa). A GXGXXG motif is present at residues 28–33; sequence GGGVRG. Positions 66–70 match the GXSXG motif; sequence GTSTG. Catalysis depends on S68, which acts as the Nucleophile. D217 acts as the Proton acceptor in catalysis. The DGA/G signature appears at 217-219; it reads DGG.

It belongs to the patatin family.

Possesses non-specific lipolytic acyl hydrolase (LAH) activity. Hydrolyzes phospholipids as well as galactolipids. May play a role in disease resistance. In Oryza sativa subsp. indica (Rice), this protein is Patatin-like protein 2 (PLP2).